Consider the following 458-residue polypeptide: Argininosuccinate lyase (458 aa).

The protein belongs to the lyase 1 family. Argininosuccinate lyase subfamily.

It is found in the cytoplasm. The enzyme catalyses 2-(N(omega)-L-arginino)succinate = fumarate + L-arginine. It functions in the pathway amino-acid biosynthesis; L-arginine biosynthesis; L-arginine from L-ornithine and carbamoyl phosphate: step 3/3. The protein is Argininosuccinate lyase of Vibrio cholerae serotype O1 (strain ATCC 39541 / Classical Ogawa 395 / O395).